The chain runs to 400 residues: 2'-5'-oligoadenylate synthase 1 (400 aa).

The interval 13–60 (DKFIEDYLLPDTCFRMQINHAIDIICGFLKERCFRGSSYPVCVSKVVK) is interaction with dsRNA. Ser-63 provides a ligand contact to ATP. Asp-75, Asp-77, and Asp-148 together coordinate Mg(2+). Residues 200-210 (QRPTKLKSLIR) form an interaction with dsRNA region. ATP-binding residues include Arg-210, Lys-213, and Gln-229. Cys-397 carries the S-geranylgeranyl cysteine lipid modification.

It belongs to the 2-5A synthase family. In terms of assembly, monomer. Homotetramer. Mg(2+) is required as a cofactor. In terms of processing, prenylated at C-terminal. C-terminal prenylation is necessary to initiate a block to SARS-CoV-2 and is associated with protection from severe COVID-1. The prenylated form is targeted to perinuclear structures rich in viral dsRNA, whereas the non-prenylated form is diffusely localized and unable to initiate a detectable block to SARS-CoV-2 replication. C-terminal prenylation is also necessary to initiate a block to cardiovirus EMCV. Post-translationally, not prenylated at C-terminal. The non-prenylated form is diffusely localized and unable to initiate a detectable block to SARS-CoV-2 replication. As to expression, expressed in lungs.

The protein localises to the cytoplasm. It localises to the mitochondrion. The protein resides in the nucleus. It is found in the microsome. Its subcellular location is the endoplasmic reticulum. The protein localises to the secreted. The catalysed reaction is 3 ATP = 5'-triphosphoadenylyl-(2'-&gt;5')-adenylyl-(2'-&gt;5')-adenosine + 2 diphosphate. Produced as a latent enzyme which is activated by dsRNA generated during the course of viral infection. The dsRNA activator must be at least 15 nucleotides long, and no modification of the 2'-hydroxyl group is tolerated. ssRNA or dsDNA do not act as activators. Its function is as follows. Interferon-induced, dsRNA-activated antiviral enzyme which plays a critical role in cellular innate antiviral response. In addition, it may also play a role in other cellular processes such as apoptosis, cell growth, differentiation and gene regulation. Synthesizes higher oligomers of 2'-5'-oligoadenylates (2-5A) from ATP which then bind to the inactive monomeric form of ribonuclease L (RNase L) leading to its dimerization and subsequent activation. Activation of RNase L leads to degradation of cellular as well as viral RNA, resulting in the inhibition of protein synthesis, thus terminating viral replication. Can mediate the antiviral effect via the classical RNase L-dependent pathway or an alternative antiviral pathway independent of RNase L. The secreted form displays antiviral effect against vesicular stomatitis virus (VSV), herpes simplex virus type 2 (HSV-2), and encephalomyocarditis virus (EMCV) and stimulates the alternative antiviral pathway independent of RNase L. In terms of biological role, when prenylated at C-terminal, acts as a double-stranded RNA (dsRNA) sensor specifically targeted to membranous replicative organelles in SARS coronavirus-2/SARS-CoV-2 infected cells where it binds to dsRNA structures in the SARS-CoV-2 5'-UTR and initiates a potent block to SARS-CoV-2 replication. Recognizes short stretches of dsRNA and activates RNase L. The binding is remarkably specific, with two conserved stem loops in the SARS-CoV-2 5'- untranslated region (UTR) constituting the principal viral target. The same mechanism is necessary to initiate a block to cardiovirus EMCV. Functionally, not prenylated at C-terminal, is diffusely localized and unable to initiate a detectable block to SARS-CoV-2 replication. The polypeptide is 2'-5'-oligoadenylate synthase 1 (OAS1) (Homo sapiens (Human)).